A 570-amino-acid chain; its full sequence is Transmembrane 7 superfamily member 3 (570 aa).

The N-terminal stretch at 1 to 21 (MGFLQLLVVAVLASEHRVAGA) is a signal peptide. N27, N61, N75, N87, and N264 each carry an N-linked (GlcNAc...) asparagine glycan. Transmembrane regions (helical) follow at residues 296-313 (VFFT…FFGH), 320-342 (LFFI…LTPI), 347-369 (NLIL…WWRF), 371-393 (ILSI…VTFF), 408-430 (FWVT…LRIL), 437-459 (VIGS…SYIT), and 479-501 (PFQT…GITL).

In terms of tissue distribution, widely expressed. Highly expressed in kidney and pancreas.

Its subcellular location is the cell membrane. Involved in the inhibition of cytokine-induced death of pancreatic beta cells. Involved in the promotion of insulin secretion from pancreatic beta cells. Is a downstream transcriptional target of p53/TP53, and acts as a pro-survival homeostatic factor that attenuates the development of cellular stress. Maintains protein homeostasis and promotes cell survival through attenuation of endoplasmic reticulum (ER) stress and the subsequent induction of unfolded protein response (UPR). This chain is Transmembrane 7 superfamily member 3 (TM7SF3), found in Homo sapiens (Human).